Here is a 348-residue protein sequence, read N- to C-terminus: Protein RecA (348 aa).

67-74 (GPESSGKT) is a binding site for ATP.

It belongs to the RecA family.

It is found in the cytoplasm. Can catalyze the hydrolysis of ATP in the presence of single-stranded DNA, the ATP-dependent uptake of single-stranded DNA by duplex DNA, and the ATP-dependent hybridization of homologous single-stranded DNAs. It interacts with LexA causing its activation and leading to its autocatalytic cleavage. This Kineococcus radiotolerans (strain ATCC BAA-149 / DSM 14245 / SRS30216) protein is Protein RecA.